A 147-amino-acid polypeptide reads, in one-letter code: Hemoglobin subunit beta (147 aa).

A Globin domain is found at 3-147 (NWTKTEKATI…VMSALGKQYH (145 aa)). The heme b site is built by His64 and His93.

The protein belongs to the globin family. As to quaternary structure, heterotetramer of two alpha chains and two beta chains. As to expression, red blood cells.

In terms of biological role, involved in oxygen transport from gills to the various peripheral tissues. The sequence is that of Hemoglobin subunit beta (hbb) from Gymnodraco acuticeps (Antarctic dragonfish).